Consider the following 329-residue polypeptide: MCALKGFLEENFYTYSVAKGNHSTVYEFILLGLTDNAELQVTLFGIFLVVYLASFMGNFGLIMLIQISPQLHTPMYFFLSHLAFVDFSFTSSVAPNTLVNFLCEVKSITFYACAIQVCCFITFVVCELYLLSIMAYDRYVAICNPLLYVILIPRKLCIKLIASTYVYGFTVGLVQTVATSYLSFCDSNVINHFYHDDVPLVALACSDTHVKELMLLIIAGFNTLCSLVIVLISYGFIFFAILRIHSAEGRQKAFSTSASHLTSITIFYGTIIFMYPQPKSSHSLNMDKVASVFNVVVIPTLNPLIYSLRNQEVKNALKRIIEKLCLAVK.

Topologically, residues 1 to 44 (MCALKGFLEENFYTYSVAKGNHSTVYEFILLGLTDNAELQVTLF) are extracellular. N-linked (GlcNAc...) asparagine glycosylation is present at N21. A helical transmembrane segment spans residues 45 to 65 (GIFLVVYLASFMGNFGLIMLI). Residues 66–73 (QISPQLHT) lie on the Cytoplasmic side of the membrane. The chain crosses the membrane as a helical span at residues 74–94 (PMYFFLSHLAFVDFSFTSSVA). At 95–113 (PNTLVNFLCEVKSITFYAC) the chain is on the extracellular side. A disulfide bridge links C113 with C205. The helical transmembrane segment at 114 to 134 (AIQVCCFITFVVCELYLLSIM) threads the bilayer. Over 135 to 157 (AYDRYVAICNPLLYVILIPRKLC) the chain is Cytoplasmic. A helical membrane pass occupies residues 158–178 (IKLIASTYVYGFTVGLVQTVA). The Extracellular segment spans residues 179 to 220 (TSYLSFCDSNVINHFYHDDVPLVALACSDTHVKELMLLIIAG). A helical transmembrane segment spans residues 221 to 241 (FNTLCSLVIVLISYGFIFFAI). Residues 242 to 253 (LRIHSAEGRQKA) are Cytoplasmic-facing. The chain crosses the membrane as a helical span at residues 254-274 (FSTSASHLTSITIFYGTIIFM). At 275–287 (YPQPKSSHSLNMD) the chain is on the extracellular side. A helical membrane pass occupies residues 288–308 (KVASVFNVVVIPTLNPLIYSL). Residues 309–329 (RNQEVKNALKRIIEKLCLAVK) lie on the Cytoplasmic side of the membrane.

Belongs to the G-protein coupled receptor 1 family.

Its subcellular location is the cell membrane. In terms of biological role, odorant receptor. This chain is Olfactory receptor 5AL1 (OR5AL1), found in Homo sapiens (Human).